The following is a 1269-amino-acid chain: Protein CFT1 (1269 aa).

Residues 393-427 (PESQPEETLDDGNESDDDLYGGDTAQTEDTTNRPL) are disordered. Acidic residues predominate over residues 395 to 412 (SQPEETLDDGNESDDDLY). Residues 416 to 425 (TAQTEDTTNR) are compositionally biased toward polar residues.

The protein belongs to the CFT1 family.

The protein localises to the nucleus. RNA-binding component of the cleavage and polyadenylation factor (CPF) complex, which plays a key role in polyadenylation-dependent pre-mRNA 3'-end formation and cooperates with cleavage factors including the CFIA complex and NAB4/CFIB. Involved in poly(A) site recognition. May be involved in coupling transcription termination and mRNA 3'-end formation. This chain is Protein CFT1 (CFT1), found in Yarrowia lipolytica (strain CLIB 122 / E 150) (Yeast).